A 99-amino-acid chain; its full sequence is Large ribosomal subunit protein bL27 (99 aa).

Positions 1 to 10 (MKLIFDIQLF) are excised as a propeptide.

It belongs to the bacterial ribosomal protein bL27 family. In terms of processing, the N-terminus is cleaved by ribosomal processing cysteine protease Prp.

In Caldicellulosiruptor saccharolyticus (strain ATCC 43494 / DSM 8903 / Tp8T 6331), this protein is Large ribosomal subunit protein bL27.